Here is a 460-residue protein sequence, read N- to C-terminus: ATP synthase subunit beta (460 aa).

150 to 157 (GGAGVGKT) is a binding site for ATP.

It belongs to the ATPase alpha/beta chains family. F-type ATPases have 2 components, CF(1) - the catalytic core - and CF(0) - the membrane proton channel. CF(1) has five subunits: alpha(3), beta(3), gamma(1), delta(1), epsilon(1). CF(0) has three main subunits: a(1), b(2) and c(9-12). The alpha and beta chains form an alternating ring which encloses part of the gamma chain. CF(1) is attached to CF(0) by a central stalk formed by the gamma and epsilon chains, while a peripheral stalk is formed by the delta and b chains.

It localises to the cell inner membrane. It catalyses the reaction ATP + H2O + 4 H(+)(in) = ADP + phosphate + 5 H(+)(out). In terms of biological role, produces ATP from ADP in the presence of a proton gradient across the membrane. The catalytic sites are hosted primarily by the beta subunits. The protein is ATP synthase subunit beta of Shigella dysenteriae serotype 1 (strain Sd197).